Reading from the N-terminus, the 187-residue chain is MSVMPDHWIKDKAIQEKMIDPFIDYKESSGILSYGLSSYGYDARIDNKFKIFTNINPVTVDPKNFPLGSFIDKEEDICIIPPNSFVLAKTVEYFKIPKDILVMCVGKSTYARCGIVVNVTPLEPGWEGYVTLEFSNTTPLPAKIYAFEGACQFIFLKGDSQCSLSYNEMKGKYMKQLDVTLPIVNNS.

DCTP is bound by residues 107-112 (KSTYAR), 131-133 (TLE), glutamine 152, tyrosine 166, lysine 175, and glutamine 176. Residue glutamate 133 is the Proton donor/acceptor of the active site.

Belongs to the dCTP deaminase family. In terms of assembly, homotrimer.

It catalyses the reaction dCTP + H2O + H(+) = dUTP + NH4(+). It functions in the pathway pyrimidine metabolism; dUMP biosynthesis; dUMP from dCTP (dUTP route): step 1/2. Functionally, catalyzes the deamination of dCTP to dUTP. This chain is dCTP deaminase, found in Ehrlichia canis (strain Jake).